The primary structure comprises 610 residues: Transcription termination factor Rho (610 aa).

The disordered stretch occupies residues 117–227 (EVSRRERRGA…GDGAEAELRQ (111 aa)). Basic and acidic residues predominate over residues 118–131 (VSRRERRGASREAD). Residues 178 to 187 (GVEQQSSSLQ) show a composition bias toward polar residues. Positions 189 to 198 (RGDDDGEGRQ) are enriched in basic and acidic residues. The segment covering 199–214 (GRRGRRFRDRDRRRRG) has biased composition (basic residues). Over residues 215–227 (ERSGDGAEAELRQ) the composition is skewed to basic and acidic residues. Residues 231-309 (VQPVAGILDV…VRLDSINGGS (79 aa)) enclose the Rho RNA-BD domain. ATP-binding positions include 352-357 (GKGQRA), 364-369 (KAGKTT), and Arg395.

This sequence belongs to the Rho family. In terms of assembly, homohexamer. The homohexamer assembles into an open ring structure.

Functionally, facilitates transcription termination by a mechanism that involves Rho binding to the nascent RNA, activation of Rho's RNA-dependent ATPase activity, and release of the mRNA from the DNA template. This Mycobacterium leprae (strain TN) protein is Transcription termination factor Rho.